Here is a 262-residue protein sequence, read N- to C-terminus: Small ribosomal subunit protein uS2 (262 aa).

The segment at 225–262 (KQGEQLTEEAKPEDKEDEKGQAEEKEVKEENNSANKEE) is disordered. Positions 232-262 (EEAKPEDKEDEKGQAEEKEVKEENNSANKEE) are enriched in basic and acidic residues.

Belongs to the universal ribosomal protein uS2 family.

The sequence is that of Small ribosomal subunit protein uS2 from Halothermothrix orenii (strain H 168 / OCM 544 / DSM 9562).